The following is a 388-amino-acid chain: Succinate--CoA ligase [ADP-forming] subunit beta (388 aa).

In terms of domain architecture, ATP-grasp spans 9-245; it reads KELLKSYGLP…KSQENERELK (237 aa). ATP-binding positions include Lys-46, 53 to 55, Glu-100, Tyr-103, and Glu-108; that span reads GRG. Positions 200 and 214 each coordinate Mg(2+). Residues Asn-265 and 322-324 contribute to the substrate site; that span reads GIV.

This sequence belongs to the succinate/malate CoA ligase beta subunit family. Heterotetramer of two alpha and two beta subunits. The cofactor is Mg(2+).

The catalysed reaction is succinate + ATP + CoA = succinyl-CoA + ADP + phosphate. It carries out the reaction GTP + succinate + CoA = succinyl-CoA + GDP + phosphate. Its pathway is carbohydrate metabolism; tricarboxylic acid cycle; succinate from succinyl-CoA (ligase route): step 1/1. Functionally, succinyl-CoA synthetase functions in the citric acid cycle (TCA), coupling the hydrolysis of succinyl-CoA to the synthesis of either ATP or GTP and thus represents the only step of substrate-level phosphorylation in the TCA. The beta subunit provides nucleotide specificity of the enzyme and binds the substrate succinate, while the binding sites for coenzyme A and phosphate are found in the alpha subunit. The chain is Succinate--CoA ligase [ADP-forming] subunit beta from Psychrobacter cryohalolentis (strain ATCC BAA-1226 / DSM 17306 / VKM B-2378 / K5).